The sequence spans 83 residues: Erabutoxin b (83 aa).

The first 21 residues, 1 to 21 (MKTLLLTLVVVTIVCLDLGYT), serve as a signal peptide directing secretion. The interval 24 to 38 (CFNHQSSQPQTTKTC) is loop I. Cystine bridges form between Cys24-Cys45, Cys38-Cys62, Cys64-Cys75, and Cys76-Cys81. The stretch between loop I and loop II stretch occupies residues 39-44 (SPGESS). The segment at 45 to 62 (CYHKQWSDFRGTIIERGC) is loop II. The loop III stretch occupies residues 64-75 (CPTVKPGIKLSC).

The protein belongs to the three-finger toxin family. Short-chain subfamily. Type I alpha-neurotoxin sub-subfamily. In terms of tissue distribution, expressed by the venom gland.

It localises to the secreted. Functionally, binds with high affinity to muscular nicotinic acetylcholine receptors (nAChRs) (tested on Torpedo marmorata, Kd=0.07 nM), and with low affinity to neuronal alpha-7/CHRNA7 nAChRs (tested on chimeric alpha-7/CHRNA7, Kd=22 uM) and inhibit acetylcholine from binding to the receptor, thereby impairing neuromuscular transmission. Produces peripheral paralysis by blocking neuromuscular transmission at the postsynaptic site. This is Erabutoxin b from Laticauda semifasciata (Black-banded sea krait).